Consider the following 243-residue polypeptide: Ribonuclease HII (243 aa).

The 195-residue stretch at 23–217 folds into the RNase H type-2 domain; that stretch reads SVIVGVDEVG…LSSECEGAPP (195 aa). 3 residues coordinate a divalent metal cation: Asp-29, Glu-30, and Asp-122. The segment at 223–243 is disordered; it reads LSSTGIKTPVDGRGDAVATRD. Basic and acidic residues predominate over residues 232–243; that stretch reads VDGRGDAVATRD.

This sequence belongs to the RNase HII family. It depends on Mn(2+) as a cofactor. Mg(2+) is required as a cofactor.

It is found in the cytoplasm. It carries out the reaction Endonucleolytic cleavage to 5'-phosphomonoester.. Its function is as follows. Endonuclease that specifically degrades the RNA of RNA-DNA hybrids. This is Ribonuclease HII from Anaplasma marginale (strain St. Maries).